A 118-amino-acid polypeptide reads, in one-letter code: MARIAGINIPDQKHTVIALTAIYGIGKTRSQAICVAAGIAENVKISELSEEQIEKLRDEVAKYVVEGDLRREVTLSIKRLMDLGTYRGLRHRRGLPVRGQRTKTNARTRKGPRKPIKK.

The tract at residues 92-118 (RRGLPVRGQRTKTNARTRKGPRKPIKK) is disordered.

This sequence belongs to the universal ribosomal protein uS13 family. In terms of assembly, part of the 30S ribosomal subunit. Forms a loose heterodimer with protein S19. Forms two bridges to the 50S subunit in the 70S ribosome.

Its function is as follows. Located at the top of the head of the 30S subunit, it contacts several helices of the 16S rRNA. In the 70S ribosome it contacts the 23S rRNA (bridge B1a) and protein L5 of the 50S subunit (bridge B1b), connecting the 2 subunits; these bridges are implicated in subunit movement. Contacts the tRNAs in the A and P-sites. This chain is Small ribosomal subunit protein uS13, found in Yersinia enterocolitica serotype O:8 / biotype 1B (strain NCTC 13174 / 8081).